The following is a 450-amino-acid chain: Phosphoglucosamine mutase (450 aa).

S101 (phosphoserine intermediate) is an active-site residue. 4 residues coordinate Mg(2+): S101, D240, D242, and D244. S101 bears the Phosphoserine mark.

Belongs to the phosphohexose mutase family. Requires Mg(2+) as cofactor. Post-translationally, activated by phosphorylation.

The catalysed reaction is alpha-D-glucosamine 1-phosphate = D-glucosamine 6-phosphate. Functionally, catalyzes the conversion of glucosamine-6-phosphate to glucosamine-1-phosphate. This is Phosphoglucosamine mutase from Streptococcus sanguinis (strain SK36).